The primary structure comprises 392 residues: Glutamate 5-kinase (392 aa).

K17 provides a ligand contact to ATP. Substrate is bound by residues S57, D144, and N156. An ATP-binding site is contributed by 176–177; sequence SD. The PUA domain maps to 282–359; that stretch reads AGILSVDAGA…AEIEALLGYA (78 aa). The segment at 373–392 is disordered; sequence TEQTGRKAGKSTKKKDEAHA.

The protein belongs to the glutamate 5-kinase family.

Its subcellular location is the cytoplasm. It catalyses the reaction L-glutamate + ATP = L-glutamyl 5-phosphate + ADP. Its pathway is amino-acid biosynthesis; L-proline biosynthesis; L-glutamate 5-semialdehyde from L-glutamate: step 1/2. Its function is as follows. Catalyzes the transfer of a phosphate group to glutamate to form L-glutamate 5-phosphate. This Allorhizobium ampelinum (strain ATCC BAA-846 / DSM 112012 / S4) (Agrobacterium vitis (strain S4)) protein is Glutamate 5-kinase.